The following is a 232-amino-acid chain: Ribonuclease HII (232 aa).

An RNase H type-2 domain is found at 26-218 (RILCGVDEAG…VRRALEGMSA (193 aa)). Residues D32, E33, and D127 each coordinate a divalent metal cation.

Belongs to the RNase HII family. Requires Mn(2+) as cofactor. Mg(2+) serves as cofactor.

It localises to the cytoplasm. It carries out the reaction Endonucleolytic cleavage to 5'-phosphomonoester.. Functionally, endonuclease that specifically degrades the RNA of RNA-DNA hybrids. This is Ribonuclease HII from Ralstonia pickettii (strain 12J).